The primary structure comprises 266 residues: Large ribosomal subunit protein eL8 (266 aa).

The span at 104–130 (PETKQEKKQRLLARAEQKAAGKGDTPT) shows a compositional bias: basic and acidic residues. The interval 104-135 (PETKQEKKQRLLARAEQKAAGKGDTPTKRPPV) is disordered.

This sequence belongs to the eukaryotic ribosomal protein eL8 family. Component of the large ribosomal subunit.

The protein resides in the cytoplasm. Functionally, component of the large ribosomal subunit. The ribosome is a large ribonucleoprotein complex responsible for the synthesis of proteins in the cell. The protein is Large ribosomal subunit protein eL8 (RPL7A) of Gallus gallus (Chicken).